The sequence spans 309 residues: 2-phospho-L-lactate transferase (309 aa).

D50 and R89 together coordinate 7,8-didemethyl-8-hydroxy-5-deazariboflavin.

It belongs to the CofD family. In terms of assembly, homodimer. Mg(2+) is required as a cofactor.

It carries out the reaction (2S)-lactyl-2-diphospho-5'-guanosine + 7,8-didemethyl-8-hydroxy-5-deazariboflavin = oxidized coenzyme F420-0 + GMP + H(+). The protein operates within cofactor biosynthesis; coenzyme F420 biosynthesis. Catalyzes the transfer of the 2-phospholactate moiety from (2S)-lactyl-2-diphospho-5'-guanosine to 7,8-didemethyl-8-hydroxy-5-deazariboflavin (FO) with the formation of oxidized coenzyme F420-0 and GMP. The protein is 2-phospho-L-lactate transferase of Methanococcus maripaludis (strain DSM 14266 / JCM 13030 / NBRC 101832 / S2 / LL).